A 310-amino-acid chain; its full sequence is Phytoene synthase 2, chloroplastic (310 aa).

Residues Asp1 to Ala25 constitute a chloroplast transit peptide.

It belongs to the phytoene/squalene synthase family. In terms of assembly, monomer.

The protein localises to the plastid. It localises to the chloroplast. The catalysed reaction is 2 (2E,6E,10E)-geranylgeranyl diphosphate = 15-cis-phytoene + 2 diphosphate. It participates in carotenoid biosynthesis; phytoene biosynthesis; all-trans-phytoene from geranylgeranyl diphosphate: step 1/1. Catalyzes the reaction from prephytoene diphosphate to phytoene. The protein is Phytoene synthase 2, chloroplastic (PSY2) of Solanum lycopersicum (Tomato).